A 475-amino-acid polypeptide reads, in one-letter code: MSPQTETKASVGFKAGVKEYKLTYYTPEYEVKDTDILAAFRVTPQPGVPPEEAGAAVAAESSTGTWTTVWTDGLTSLDRYKGRCYDIEPVPGEEDQYICYVAYPLDLFEEGSVTNMFTSIVGNVFGFKALRALRLEDLRVPTAYIKTFQGPPHGIQVERDKLNKYGRPLLGCTIKPKLGLSAKNYGRAVYECLRGGLDFTKDDENVNSQPFMRWRDRFLFCAEAIFKSQAETGEIKGHYLNATAGTCEEMIKRAMCARELGVPIVMHDYLTGGFTANTSLAHYCRDNGLLLHIHRAMHAVIDRQKNHGMHFRVLAKALRMSGGDHIHAGTVVGKLEGERDITLGFVDLLRDDFIEKDRSRGIYFTQDWVSMPGVLPVASGGIHVWHMPALTEIFGDDSVLQFGGGTLGHPWGNAPGAVANRVALEACVQARNEGRDLAREGNEIIREASKWSPELAAACEVWKAIKFEFEAMDTL.

Residues M1–S2 constitute a propeptide that is removed on maturation. P3 carries the post-translational modification N-acetylproline. Residue K14 is modified to N6,N6,N6-trimethyllysine. Substrate contacts are provided by N123 and T173. K175 serves as the catalytic Proton acceptor. A substrate-binding site is contributed by K177. Mg(2+) is bound by residues K201, D203, and E204. K201 carries the N6-carboxylysine modification. H294 acts as the Proton acceptor in catalysis. Substrate contacts are provided by R295, H327, and S379.

Belongs to the RuBisCO large chain family. Type I subfamily. Heterohexadecamer of 8 large chains and 8 small chains; disulfide-linked. The disulfide link is formed within the large subunit homodimers. Requires Mg(2+) as cofactor. Post-translationally, the disulfide bond which can form in the large chain dimeric partners within the hexadecamer appears to be associated with oxidative stress and protein turnover.

It localises to the plastid. Its subcellular location is the chloroplast. The catalysed reaction is 2 (2R)-3-phosphoglycerate + 2 H(+) = D-ribulose 1,5-bisphosphate + CO2 + H2O. The enzyme catalyses D-ribulose 1,5-bisphosphate + O2 = 2-phosphoglycolate + (2R)-3-phosphoglycerate + 2 H(+). Functionally, ruBisCO catalyzes two reactions: the carboxylation of D-ribulose 1,5-bisphosphate, the primary event in carbon dioxide fixation, as well as the oxidative fragmentation of the pentose substrate in the photorespiration process. Both reactions occur simultaneously and in competition at the same active site. The polypeptide is Ribulose bisphosphate carboxylase large chain (Gossypium hirsutum (Upland cotton)).